A 236-amino-acid chain; its full sequence is 7-cyano-7-deazaguanine synthase (236 aa).

An ATP-binding site is contributed by 7-17 (CSGGLDSVSLA). Residues Cys185, Cys193, Cys196, and Cys199 each coordinate Zn(2+).

This sequence belongs to the QueC family. Zn(2+) is required as a cofactor.

It catalyses the reaction 7-carboxy-7-deazaguanine + NH4(+) + ATP = 7-cyano-7-deazaguanine + ADP + phosphate + H2O + H(+). It functions in the pathway purine metabolism; 7-cyano-7-deazaguanine biosynthesis. In terms of biological role, catalyzes the ATP-dependent conversion of 7-carboxy-7-deazaguanine (CDG) to 7-cyano-7-deazaguanine (preQ(0)). The sequence is that of 7-cyano-7-deazaguanine synthase from Rhizobium etli (strain ATCC 51251 / DSM 11541 / JCM 21823 / NBRC 15573 / CFN 42).